The sequence spans 165 residues: Shikimate kinase (165 aa).

Residue 12–17 (GCGKST) participates in ATP binding. A Mg(2+)-binding site is contributed by Ser16. Positions 34, 57, and 79 each coordinate substrate. Residue Arg116 participates in ATP binding. Arg133 contacts substrate.

This sequence belongs to the shikimate kinase family. In terms of assembly, monomer. Mg(2+) is required as a cofactor.

It is found in the cytoplasm. It catalyses the reaction shikimate + ATP = 3-phosphoshikimate + ADP + H(+). The protein operates within metabolic intermediate biosynthesis; chorismate biosynthesis; chorismate from D-erythrose 4-phosphate and phosphoenolpyruvate: step 5/7. Functionally, catalyzes the specific phosphorylation of the 3-hydroxyl group of shikimic acid using ATP as a cosubstrate. The sequence is that of Shikimate kinase from Clostridium botulinum (strain Alaska E43 / Type E3).